Here is a 325-residue protein sequence, read N- to C-terminus: uncharacterized protein (325 aa).

This sequence belongs to the mgp1/MG371 family.

This is an uncharacterized protein from Mycoplasma pneumoniae (strain ATCC 29342 / M129 / Subtype 1) (Mycoplasmoides pneumoniae).